A 509-amino-acid polypeptide reads, in one-letter code: Ribonuclease Y (509 aa).

The helical transmembrane segment at 5 to 25 (IIILLSVFCGIFFICFIICSS) threads the bilayer. The region spanning 199–259 (TTNIVKLPSD…IRREIATRTL (61 aa)) is the KH domain. The region spanning 325–418 (VLAHSIEVAK…VAIADSISAS (94 aa)) is the HD domain.

The protein belongs to the RNase Y family.

Its subcellular location is the cell membrane. Its function is as follows. Endoribonuclease that initiates mRNA decay. This Mycoplasma capricolum subsp. capricolum (strain California kid / ATCC 27343 / NCTC 10154) protein is Ribonuclease Y.